The following is a 49-amino-acid chain: U1-theraphotoxin-Lp1b (49 aa).

Cystine bridges form between C4–C17, C8–C41, C22–C24, and C35–C46.

Expressed by the venom gland.

Its subcellular location is the secreted. In terms of biological role, toxin that causes irreversible contractile paralysis into adult Aedes aegypti resulting in 100% mortality after 24 hours. The polypeptide is U1-theraphotoxin-Lp1b (Lasiodora parahybana (Brazilian salmon pink birdeater)).